Reading from the N-terminus, the 115-residue chain is ER exit protein (115 aa).

The protein belongs to the STEEP1 family.

Its function is as follows. May stimulate membrane curvature formation and subsequent endoplasmic reticulum exit site (ERES) establishment. The protein is ER exit protein of Schizosaccharomyces pombe (strain 972 / ATCC 24843) (Fission yeast).